The chain runs to 942 residues: Isoleucine--tRNA ligase (942 aa).

The 'HIGH' region signature appears at Pro58–His68. An L-isoleucyl-5'-AMP-binding site is contributed by Glu566. The 'KMSKS' region signature appears at Lys607 to Ser611. Residue Lys610 participates in ATP binding. Cys905, Cys908, Cys925, and Cys928 together coordinate Zn(2+).

This sequence belongs to the class-I aminoacyl-tRNA synthetase family. IleS type 1 subfamily. In terms of assembly, monomer. Zn(2+) is required as a cofactor.

The protein resides in the cytoplasm. The catalysed reaction is tRNA(Ile) + L-isoleucine + ATP = L-isoleucyl-tRNA(Ile) + AMP + diphosphate. Catalyzes the attachment of isoleucine to tRNA(Ile). As IleRS can inadvertently accommodate and process structurally similar amino acids such as valine, to avoid such errors it has two additional distinct tRNA(Ile)-dependent editing activities. One activity is designated as 'pretransfer' editing and involves the hydrolysis of activated Val-AMP. The other activity is designated 'posttransfer' editing and involves deacylation of mischarged Val-tRNA(Ile). This chain is Isoleucine--tRNA ligase, found in Vibrio parahaemolyticus serotype O3:K6 (strain RIMD 2210633).